The chain runs to 411 residues: Protein-lysine 6-oxidase (411 aa).

A signal peptide spans 1–21; sequence MRFAWTVLFLGQLQFCPLLRC. Positions 22–162 are cleaved as a propeptide — removed by BMP1; sequence APQAPREPPA…PPSHVDRMVG (141 aa). The disordered stretch occupies residues 60–168; the sequence is PQRRRDSSAT…RMVGDDPYNP (109 aa). Asn91 and Asn138 each carry an N-linked (GlcNAc...) asparagine glycan. Tyr181 carries the sulfotyrosine modification. A lysyl-oxidase like region spans residues 207–411; that stretch reads PDLVPDPYYI…YASGCTISPY (205 aa). 5 cysteine pairs are disulfide-bonded: Cys232–Cys238, Cys285–Cys334, Cys318–Cys324, Cys345–Cys355, and Cys392–Cys406. Positions 286, 288, and 290 each coordinate Cu cation. Residues 314 to 349 constitute a cross-link (lysine tyrosylquinone (Lys-Tyr)); that stretch reads KASFCLEDTSCDYGYHRRFACTAHTQGLSPGCYDTY. Tyr349 bears the 2',4',5'-topaquinone mark.

It belongs to the lysyl oxidase family. Interacts with MFAP4. Interacts (via propeptide) with EFEMP2; this interaction is strong and facilitates formation of ternary complexes with ELN during elastic fiber assembly; this interaction limits interaction of EFEMP2 with FBLN5. Cu cation is required as a cofactor. It depends on lysine tyrosylquinone residue as a cofactor. In terms of processing, the lysine tyrosylquinone cross-link (LTQ) is generated by condensation of the epsilon-amino group of a lysine with a topaquinone produced by oxidation of tyrosine. Proteolytically cleaved by BMP1 which removes the propeptide. Also proteolytically cleaved by ADAMTS2 and ADAMTS14, but not by ADAMTS3, at an additional cleavage site downstream of the BMP1 cleavage site. The propeptide plays a role in directing the deposition of this enzyme to elastic fibers, via interaction with tropoelastin. Cleavage by BMP1 to remove the propeptide does not increase enzymatic activity but increases binding to collagen. Cleavage by ADAMTS2 produces a form with reduced collagen-binding activity. Post-translationally, sulfated at Tyr-181 and also at either Tyr-177 or Tyr-178 which enhances binding to collagen. As to expression, aorta and lung.

Its subcellular location is the secreted. The protein resides in the extracellular space. The catalysed reaction is L-lysyl-[protein] + O2 + H2O = (S)-2-amino-6-oxohexanoyl-[protein] + H2O2 + NH4(+). In terms of biological role, responsible for the post-translational oxidative deamination of peptidyl lysine residues in precursors to fibrous collagen and elastin. Regulator of Ras expression. May play a role in tumor suppression. Plays a role in the aortic wall architecture. This Rattus norvegicus (Rat) protein is Protein-lysine 6-oxidase.